We begin with the raw amino-acid sequence, 389 residues long: NAD-dependent protein deacetylase sirtuin-2 (389 aa).

Residues 1 to 34 (MAEPDPSHPLETQAGKVQEAQDSDSDSEGGAAGG) are disordered. The residue at position 2 (Ala-2) is an N-acetylalanine. Phosphoserine occurs at positions 23, 25, 27, and 53. A Deacetylase sirtuin-type domain is found at 57–338 (RLLDELTLEG…LALAELLGWK (282 aa)). Residues 85–89 (AGIST) and 95–97 (DFR) contribute to the NAD(+) site. Ser-100 is subject to Phosphoserine. Position 167-170 (167-170 (QNID)) interacts with NAD(+). Residue His-187 is the Proton acceptor of the active site. Residues Cys-195 and Cys-200 each contribute to the Zn(2+) site. Ser-207 carries the phosphoserine modification. Cys-221 and Cys-224 together coordinate Zn(2+). NAD(+)-binding positions include 262–263 (TS), 286–288 (NKE), and Cys-324. The tract at residues 350-389 (ASIDAQSGAEAPNPSTSASPRKSPPPAQDEARTTEREKPQ) is disordered. A phosphoserine mark is found at Ser-368 and Ser-372. Over residues 378–389 (DEARTTEREKPQ) the composition is skewed to basic and acidic residues.

This sequence belongs to the sirtuin family. Class I subfamily. Interacts with CDC20, FOXO3 and FZR1. Associates with microtubules in primary cortical mature neurons. Homotrimer. Interacts (via both phosphorylated, unphosphorylated, active or inactive forms) with HDAC6; the interaction is necessary for the complex to interact with alpha-tubulin, suggesting that these proteins belong to a large complex that deacetylates the cytoskeleton. Interacts with FOXO1; the interaction is disrupted upon serum-starvation or oxidative stress, leading to increased level of acetylated FOXO1 and induction of autophagy. Interacts with RELA; the interaction occurs in the cytoplasm and is increased in a TNF-alpha-dependent manner. Interacts with HOXA10; the interaction is direct. Interacts with YWHAB and YWHAG; the interactions occur in a AKT-dependent manner and increase SIRT2-dependent TP53 deacetylation. Interacts with MAPK1/ERK2 and MAPK3/ERK1; the interactions increase SIRT2 stability and deacetylation activity. Interacts (phosphorylated form) with KMT5A isoform 2; the interaction is direct, stimulates KMT5A-mediated methyltransferase activity on histone at 'Lys-20' (H4K20me1) and is increased in a H(2)O(2)-induced oxidative stress-dependent manner. Interacts with G6PD; the interaction is enhanced by H(2)O(2) treatment. Interacts with a G1/S-specific cyclin E-CDK2 complex. Interacts with AURKA, CDK5R1 (p35 form) and CDK5 and HIF1A. Interacts with the tRNA ligase SARS1; recruited to the VEGFA promoter via interaction with SARS1. Interacts with BEX4; negatively regulates alpha-tubulin deacetylation by SIRT2. The cofactor is Zn(2+). Post-translationally, phosphorylated at phosphoserine and phosphothreonine. Phosphorylated at Ser-368 by a mitotic kinase CDK1/cyclin B at the G2/M transition; phosphorylation regulates the delay in cell-cycle progression. Phosphorylated at Ser-368 by a mitotic kinase G1/S-specific cyclin E/Cdk2 complex; phosphorylation inactivates SIRT2-mediated alpha-tubulin deacetylation and thereby negatively regulates cell adhesion, cell migration and neurite outgrowth during neuronal differentiation. Phosphorylated by cyclin A/Cdk2 and p35-Cdk5 complexes and to a lesser extent by the cyclin D3/Cdk4 and cyclin B/Cdk1, in vitro. Dephosphorylated at Ser-368 by CDC14A and CDC14B around early anaphase. In terms of processing, acetylated by EP300; acetylation leads both to the decreased of SIRT2-mediated alpha-tubulin deacetylase activity and SIRT2-mediated down-regulation of TP53 transcriptional activity. Ubiquitinated.

It localises to the nucleus. Its subcellular location is the cytoplasm. It is found in the perinuclear region. The protein localises to the cytoskeleton. The protein resides in the microtubule organizing center. It localises to the centrosome. Its subcellular location is the centriole. It is found in the spindle. The protein localises to the midbody. The protein resides in the chromosome. It localises to the perikaryon. Its subcellular location is the cell projection. It is found in the growth cone. The protein localises to the myelin membrane. The enzyme catalyses N(6)-acetyl-L-lysyl-[protein] + NAD(+) + H2O = 2''-O-acetyl-ADP-D-ribose + nicotinamide + L-lysyl-[protein]. The catalysed reaction is N(6)-tetradecanoyl-L-lysyl-[protein] + NAD(+) + H2O = 2''-O-tetradecanoyl-ADP-D-ribose + nicotinamide + L-lysyl-[protein]. It catalyses the reaction N(6)-hexadecanoyl-L-lysyl-[protein] + NAD(+) + H2O = 2''-O-hexadecanoyl-ADP-D-ribose + nicotinamide + L-lysyl-[protein]. Its activity is regulated as follows. Inhibited by Sirtinol, A3 and M15 small molecules. Inhibited by nicotinamide. In terms of biological role, NAD-dependent protein deacetylase, which deacetylates internal lysines on histone and alpha-tubulin as well as many other proteins such as key transcription factors. Participates in the modulation of multiple and diverse biological processes such as cell cycle control, genomic integrity, microtubule dynamics, cell differentiation, metabolic networks, and autophagy. Plays a major role in the control of cell cycle progression and genomic stability. Functions in the antephase checkpoint preventing precocious mitotic entry in response to microtubule stress agents, and hence allowing proper inheritance of chromosomes. Positively regulates the anaphase promoting complex/cyclosome (APC/C) ubiquitin ligase complex activity by deacetylating CDC20 and FZR1, then allowing progression through mitosis. Associates both with chromatin at transcriptional start sites (TSSs) and enhancers of active genes. Plays a role in cell cycle and chromatin compaction through epigenetic modulation of the regulation of histone H4 'Lys-20' methylation (H4K20me1) during early mitosis. Specifically deacetylates histone H4 at 'Lys-16' (H4K16ac) between the G2/M transition and metaphase enabling H4K20me1 deposition by KMT5A leading to ulterior levels of H4K20me2 and H4K20me3 deposition throughout cell cycle, and mitotic S-phase progression. Deacetylates KMT5A modulating KMT5A chromatin localization during the mitotic stress response. Also deacetylates histone H3 at 'Lys-57' (H3K56ac) during the mitotic G2/M transition. During oocyte meiosis progression, may deacetylate histone H4 at 'Lys-16' (H4K16ac) and alpha-tubulin, regulating spindle assembly and chromosome alignment by influencing microtubule dynamics and kinetochore function. Deacetylates histone H4 at 'Lys-16' (H4K16ac) at the VEGFA promoter and thereby contributes to regulate expression of VEGFA, a key regulator of angiogenesis. Deacetylates alpha-tubulin at 'Lys-40' and hence controls neuronal motility, oligodendroglial cell arbor projection processes and proliferation of non-neuronal cells. Phosphorylation at Ser-368 by a G1/S-specific cyclin E-CDK2 complex inactivates SIRT2-mediated alpha-tubulin deacetylation, negatively regulating cell adhesion, cell migration and neurite outgrowth during neuronal differentiation. Deacetylates PARD3 and participates in the regulation of Schwann cell peripheral myelination formation during early postnatal development and during postinjury remyelination. Involved in several cellular metabolic pathways. Plays a role in the regulation of blood glucose homeostasis by deacetylating and stabilizing phosphoenolpyruvate carboxykinase PCK1 activity in response to low nutrient availability. Acts as a key regulator in the pentose phosphate pathway (PPP) by deacetylating and activating the glucose-6-phosphate G6PD enzyme, and therefore, stimulates the production of cytosolic NADPH to counteract oxidative damage. Maintains energy homeostasis in response to nutrient deprivation as well as energy expenditure by inhibiting adipogenesis and promoting lipolysis. Attenuates adipocyte differentiation by deacetylating and promoting FOXO1 interaction to PPARG and subsequent repression of PPARG-dependent transcriptional activity. Plays a role in the regulation of lysosome-mediated degradation of protein aggregates by autophagy in neuronal cells. Deacetylates FOXO1 in response to oxidative stress or serum deprivation, thereby negatively regulating FOXO1-mediated autophagy. Deacetylates a broad range of transcription factors and co-regulators regulating target gene expression. Deacetylates transcriptional factor FOXO3 stimulating the ubiquitin ligase SCF(SKP2)-mediated FOXO3 ubiquitination and degradation. Deacetylates HIF1A and therefore promotes HIF1A degradation and inhibition of HIF1A transcriptional activity in tumor cells in response to hypoxia. Deacetylates RELA in the cytoplasm inhibiting NF-kappaB-dependent transcription activation upon TNF-alpha stimulation. Inhibits transcriptional activation by deacetylating p53/TP53 and EP300. Also deacetylates EIF5A. Functions as a negative regulator on oxidative stress-tolerance in response to anoxia-reoxygenation conditions. Plays a role as tumor suppressor. In addition to protein deacetylase activity, also has activity toward long-chain fatty acyl groups and mediates protein-lysine demyristoylation and depalmitoylation of target proteins, such as ARF6 and KRAS, thereby regulating their association with membranes. The protein is NAD-dependent protein deacetylase sirtuin-2 (SIRT2) of Macaca fascicularis (Crab-eating macaque).